A 413-amino-acid polypeptide reads, in one-letter code: Cardiolipin synthase B (413 aa).

PLD phosphodiesterase domains lie at 108 to 135 (VFRR…SAEH) and 285 to 312 (RRRP…DPLS). Active-site residues include histidine 113, lysine 115, aspartate 120, histidine 290, lysine 292, and aspartate 297. Positions 390–413 (VGPPAQPTMETQDRVETENTGVKP) are disordered.

This sequence belongs to the phospholipase D family. Cardiolipin synthase subfamily. ClsB sub-subfamily.

The protein localises to the cell membrane. The catalysed reaction is 2 a 1,2-diacyl-sn-glycero-3-phospho-(1'-sn-glycerol) = a cardiolipin + glycerol. Catalyzes the phosphatidyl group transfer from one phosphatidylglycerol molecule to another to form cardiolipin (CL) (diphosphatidylglycerol) and glycerol. This is Cardiolipin synthase B from Escherichia coli O6:H1 (strain CFT073 / ATCC 700928 / UPEC).